Reading from the N-terminus, the 767-residue chain is TBC1 domain family member 16 (767 aa).

2 disordered regions span residues 93-138 (EALR…TPKD) and 169-228 (GVDG…SFDS). Positions 107–117 (KAPRPRGRRTR) are enriched in basic residues. Residues 175–194 (PASQPACSPSGILSTVSPQD) are compositionally biased toward polar residues. Basic and acidic residues predominate over residues 197 to 206 (EEGREPRPEA). Residues 425-635 (GIDVSIRGEV…RIWEACWAHY (211 aa)) enclose the Rab-GAP TBC domain. The interval 729–767 (HPGSESCPYGGTVEMPSPKSLREGKKGPKTPQDGFGFRR) is disordered.

May act as a GTPase-activating protein for Rab family protein(s). This Homo sapiens (Human) protein is TBC1 domain family member 16 (TBC1D16).